Here is a 257-residue protein sequence, read N- to C-terminus: MLALISPAKTLDYETALPTDEFTQPRLLENSAQLIDVCRKLSASEIANLMSVSEKIATLNADRFRDWKPEFDFSNARQAIYAFKGDVYTGLDAYHLKDKDIDFAQQHLRMLSGLYGLLRPLDLMMPYRLEMGTKLKNTRGHNLYEFWDDIITNQINEDLAAIKSELLVNLASDEYYKSVNEKKIKAEIVKPVFLDQKNSKYKVISFYAKKARGLMARFIIENQLNKAEDLKAFNTEGYYFDADNSSAKELVFKRDEQ.

It belongs to the UPF0246 family.

The protein is UPF0246 protein A1S_2267 of Acinetobacter baumannii (strain ATCC 17978 / DSM 105126 / CIP 53.77 / LMG 1025 / NCDC KC755 / 5377).